Reading from the N-terminus, the 214-residue chain is Cytochrome c biogenesis ATP-binding export protein CcmA (214 aa).

Residues 16-212 (LRVSGLSLSR…PDAKRIDLGA (197 aa)) enclose the ABC transporter domain. 48 to 55 (GPNGTGKT) contacts ATP.

It belongs to the ABC transporter superfamily. CcmA exporter (TC 3.A.1.107) family. In terms of assembly, the complex is composed of two ATP-binding proteins (CcmA) and two transmembrane proteins (CcmB).

The protein localises to the cell inner membrane. It carries out the reaction heme b(in) + ATP + H2O = heme b(out) + ADP + phosphate + H(+). Its function is as follows. Part of the ABC transporter complex CcmAB involved in the biogenesis of c-type cytochromes; once thought to export heme, this seems not to be the case, but its exact role is uncertain. Responsible for energy coupling to the transport system. This chain is Cytochrome c biogenesis ATP-binding export protein CcmA, found in Maricaulis maris (strain MCS10) (Caulobacter maris).